The following is a 295-amino-acid chain: Bifunctional protein FolD (295 aa).

Residues 166 to 168, S195, and I236 contribute to the NADP(+) site; that span reads GRS.

It belongs to the tetrahydrofolate dehydrogenase/cyclohydrolase family. Homodimer.

The catalysed reaction is (6R)-5,10-methylene-5,6,7,8-tetrahydrofolate + NADP(+) = (6R)-5,10-methenyltetrahydrofolate + NADPH. The enzyme catalyses (6R)-5,10-methenyltetrahydrofolate + H2O = (6R)-10-formyltetrahydrofolate + H(+). The protein operates within one-carbon metabolism; tetrahydrofolate interconversion. In terms of biological role, catalyzes the oxidation of 5,10-methylenetetrahydrofolate to 5,10-methenyltetrahydrofolate and then the hydrolysis of 5,10-methenyltetrahydrofolate to 10-formyltetrahydrofolate. The chain is Bifunctional protein FolD from Pelodictyon phaeoclathratiforme (strain DSM 5477 / BU-1).